The following is a 295-amino-acid chain: Bifunctional protein FolD (295 aa).

NADP(+)-binding positions include 164 to 166, Ser193, and Ile234; that span reads GRS.

The protein belongs to the tetrahydrofolate dehydrogenase/cyclohydrolase family. In terms of assembly, homodimer.

It carries out the reaction (6R)-5,10-methylene-5,6,7,8-tetrahydrofolate + NADP(+) = (6R)-5,10-methenyltetrahydrofolate + NADPH. It catalyses the reaction (6R)-5,10-methenyltetrahydrofolate + H2O = (6R)-10-formyltetrahydrofolate + H(+). It functions in the pathway one-carbon metabolism; tetrahydrofolate interconversion. In terms of biological role, catalyzes the oxidation of 5,10-methylenetetrahydrofolate to 5,10-methenyltetrahydrofolate and then the hydrolysis of 5,10-methenyltetrahydrofolate to 10-formyltetrahydrofolate. This Flavobacterium johnsoniae (strain ATCC 17061 / DSM 2064 / JCM 8514 / BCRC 14874 / CCUG 350202 / NBRC 14942 / NCIMB 11054 / UW101) (Cytophaga johnsonae) protein is Bifunctional protein FolD.